An 893-amino-acid chain; its full sequence is UPF0182 protein CLB_0018 (893 aa).

Helical transmembrane passes span Ile9–Ile29, Ala49–Tyr69, Leu94–Tyr114, Val154–Glu174, Leu202–Trp222, Phe246–Val266, and Val273–Leu293.

The protein belongs to the UPF0182 family.

Its subcellular location is the cell membrane. In Clostridium botulinum (strain ATCC 19397 / Type A), this protein is UPF0182 protein CLB_0018.